We begin with the raw amino-acid sequence, 539 residues long: GMP synthase [glutamine-hydrolyzing] (539 aa).

One can recognise a Glutamine amidotransferase type-1 domain in the interval 4-202; sequence KILILDFGSQ…VLGICRAKAD (199 aa). Cys-81 functions as the Nucleophile in the catalytic mechanism. Catalysis depends on residues His-176 and Glu-178. Residues 203 to 395 form the GMPS ATP-PPase domain; sequence WVMKDHIEEA…LGLPPEMVYR (193 aa). 230–236 is an ATP binding site; it reads SGGVDSS.

Homodimer.

The catalysed reaction is XMP + L-glutamine + ATP + H2O = GMP + L-glutamate + AMP + diphosphate + 2 H(+). Its pathway is purine metabolism; GMP biosynthesis; GMP from XMP (L-Gln route): step 1/1. Functionally, catalyzes the synthesis of GMP from XMP. The chain is GMP synthase [glutamine-hydrolyzing] from Cupriavidus pinatubonensis (strain JMP 134 / LMG 1197) (Cupriavidus necator (strain JMP 134)).